The following is a 113-amino-acid chain: Protein FPV195 (113 aa).

Belongs to the poxviruses A31 family.

This Vertebrata (FPV) protein is Protein FPV195.